Here is a 200-residue protein sequence, read N- to C-terminus: Recombination protein RecR (200 aa).

A C4-type zinc finger spans residues 57-72 (CEHCRTFTEEDICSIC). The region spanning 81–176 (RLLCVVEMPA…KVSRIAHGIP (96 aa)) is the Toprim domain.

It belongs to the RecR family.

Functionally, may play a role in DNA repair. It seems to be involved in an RecBC-independent recombinational process of DNA repair. It may act with RecF and RecO. This chain is Recombination protein RecR, found in Mannheimia succiniciproducens (strain KCTC 0769BP / MBEL55E).